Here is a 61-residue protein sequence, read N- to C-terminus: Double gene block protein 1 (61 aa).

The interval 1-45 (MDIESEVPVVGKQMLAGNRGKQKTRRSVAKDAIRKPASDSTNGGN) is disordered. The tract at residues 17–35 (GNRGKQKTRRSVAKDAIRK) is RNA-binding. Basic and acidic residues predominate over residues 28 to 37 (VAKDAIRKPA).

Belongs to the carmovirus double gene block protein 1 family. Homodimer.

In terms of biological role, cell-to-cell movement. Displays RNA-binding activity. In Carnation mottle virus (CarMV), this protein is Double gene block protein 1.